We begin with the raw amino-acid sequence, 187 residues long: MGNKQTIFTEEQLDNYQDCTFFNKKDILKLHARFYELAPNLVPMDYRKSPIVHVPMSLIIQMPELRENPFKERIVEAFSEDGEGNLTFNDFVDMFSVLCESAPRELKANYAFKIYDFNTDNFICKEDLEMTLARLTKSELEEDEVVLVCDKVIEEADLDGDGKLGFADFEDMIAKAPDFLSTFHIRI.

EF-hand domains are found at residues 66-101, 103-138, and 144-179; these read RENP…LCES, PREL…LTKS, and EVVL…APDF. 9 residues coordinate Ca(2+): D116, N118, D120, D127, D157, D159, D161, K163, and D168.

Monomer. Homodimer. Interacts with WHRN and MYO7A. Interacts with ITGA2B (via C-terminus cytoplasmic tail region); this interaction is stabilized/increased in a calcium and magnesium-dependent manner. Interacts with ITGA7 (via C-terminus cytoplasmic tail region); this interaction is stabilized/increased in a calcium and magnesium-dependent manner. Interacts with TMC1. Interacts with TMC2. Interacts with PIEZO1. Expressed in inner and outer segments of photoreceptor cells, as well as in the pigmented epithelium. Also observed in the inner and outer plexiform layers and in the ganglion cell layer (at protein level). Expressed in sensory hair cell stereocilia, with expression mainly at the basal body of the kinocilium and in the hair bundle stereocilia; and the apical surface of hair cells (at protein level). Located in the tip region of the stereocilia and at the apical surface of hair cells around the cuticular plate (at protein level). Not expressed in the hair bundles of the vestibular hair cells. Strongly expressed in skeletal muscles, brain, kidney and liver. Expressed in the skeletal muscle, retina and cochlea. Expressed in megakaryocytes and endothelial cells. Expressed in heart, spleen, lung, and inner ear. In the inner ear, expressed in the vestibule, basilar membrane and spiral ganglion cells. Expressed in the supporting cells in both the organ of Corti and the vestibular sensory epithelia.

It is found in the cytoplasm. The protein resides in the cell projection. Its subcellular location is the stereocilium. The protein localises to the photoreceptor inner segment. It localises to the cilium. It is found in the photoreceptor outer segment. The protein resides in the cell membrane. Its subcellular location is the sarcolemma. Calcium- and integrin-binding protein that plays a role in intracellular calcium homeostasis. Acts as an auxiliary subunit of the sensory mechanoelectrical transduction (MET) channel in hair cells. Essential for mechanoelectrical transduction (MET) currents in auditory hair cells and thereby required for hearing. Regulates the function of hair cell mechanotransduction by controlling the distribution of transmembrane channel-like proteins TMC1 and TMC2, and by regulating the function of the MET channels in hair cells. Required for the maintenance of auditory hair cell stereocilia bundle morphology and function and for hair-cell survival in the cochlea. Critical for proper photoreceptor cell maintenance and function. Plays a role in intracellular calcium homeostasis by decreasing ATP-induced calcium release. Seems to be dispensable for vestibular functions. This is Calcium and integrin-binding family member 2 (Cib2) from Mus musculus (Mouse).